Here is a 395-residue protein sequence, read N- to C-terminus: Protein TAMALIN (395 aa).

Positions M1–A52 are disordered. Residues A16–A33 are compositionally biased toward low complexity. Phosphothreonine is present on T77. S94 is modified (phosphoserine). The region spanning V101–T190 is the PDZ domain. Residues V181–P258 form an interaction with PSCD3 region. Phosphotyrosine is present on Y237. An Omega-N-methylarginine modification is found at R270. A disordered region spans residues S293–G349. Pro residues predominate over residues P296–A305. A compositionally biased stretch (gly residues) spans G338–P348. At S387 the chain carries Phosphoserine.

As to quaternary structure, heteromer. Composed of TAMALIN, CYTH2 and at least one GRM1. Also interacts with CYTH3, GRM2, GRM3 and GRM5.

It is found in the cytoplasm. The protein resides in the perinuclear region. It localises to the cell membrane. Its subcellular location is the postsynaptic cell membrane. In terms of biological role, plays a role in intracellular trafficking and contributes to the macromolecular organization of group 1 metabotropic glutamate receptors (mGluRs) at synapses. The polypeptide is Protein TAMALIN (Homo sapiens (Human)).